We begin with the raw amino-acid sequence, 542 residues long: Glucans biosynthesis protein D (542 aa).

Residues 1-31 constitute a signal peptide (tat-type signal); it reads MHRRNLLKASMAIAAYTGLSATGLLASRAWA.

This sequence belongs to the OpgD/OpgG family. Post-translationally, predicted to be exported by the Tat system. The position of the signal peptide cleavage has not been experimentally proven.

The protein localises to the periplasm. Its pathway is glycan metabolism; osmoregulated periplasmic glucan (OPG) biosynthesis. Functionally, probably involved in the control of the structural glucose backbone of osmoregulated periplasmic glucans (OPGs). The protein is Glucans biosynthesis protein D of Pseudomonas fluorescens (strain Pf0-1).